Consider the following 781-residue polypeptide: uncharacterized protein (781 aa).

The tract at residues 1–34 is disordered; the sequence is MNIAEEPSDEVISSGPEDTDICSQQTSASAEAGD. S29 bears the Phosphoserine mark. RRM domains lie at 195-273 and 295-418; these read GNIF…YHVE and RCLF…KAVQ. Residues 345-375 are disordered; sequence SNTRSSSSVSFNEEGSVESNKSSNNTNGNAQ. Residues 347-364 show a composition bias toward low complexity; that stretch reads TRSSSSVSFNEEGSVESN. Polar residues predominate over residues 365-374; that stretch reads KSSNNTNGNA. S433, S435, S482, and S485 each carry phosphoserine. T486 is modified (phosphothreonine). S501 is modified (phosphoserine). Positions 540–638 constitute an RRM 3 domain; the sequence is SNLYVKHIPL…QVLSVSFAQK (99 aa). The disordered stretch occupies residues 640-668; the sequence is GNLSSSDDDDQSQTDNSSKFQNFQPHNDY.

Interacts with RBG1.

This is an uncharacterized protein from Saccharomyces cerevisiae (strain ATCC 204508 / S288c) (Baker's yeast).